We begin with the raw amino-acid sequence, 203 residues long: Twist-related protein 1 (203 aa).

Low complexity predominate over residues 1–18 (MMQDVSSSPVSPADDSLS). The segment at 1–106 (MMQDVSSSPV…GGGSPQSYEE (106 aa)) is disordered. Basic residues predominate over residues 34 to 43 (RGGRKRRSSS). 2 stretches are compositionally biased toward gly residues: residues 47–66 (AGGG…GGDE) and 81–100 (GCGG…GGGS). In terms of domain architecture, bHLH spans 109 to 160 (TQRVMANVRERQRTQSLNEAFAALRKIIPTLPSDKLSKIQTLKLAARYIDFL). The tract at residues 162 to 192 (QVLQSDELDSKMASCSYVAHERLSYAFSVWR) is sufficient for transactivation activity.

In terms of assembly, efficient DNA binding requires dimerization with another bHLH protein. Homodimer or heterodimer with E proteins such as TCF3. ID1 binds preferentially to TCF3 but does not interact efficiently with TWIST1 so ID1 levels control the amount of TCF3 available to dimerize with TWIST and thus determine the type of dimer formed.

The protein localises to the nucleus. Functionally, acts as a transcriptional regulator. Inhibits myogenesis by sequestrating E proteins, inhibiting trans-activation by MEF2, and inhibiting DNA-binding by MYOD1 through physical interaction. This interaction probably involves the basic domains of both proteins. Also represses expression of pro-inflammatory cytokines such as TNFA and IL1B. Regulates cranial suture patterning and fusion. Activates transcription as a heterodimer with E proteins. Regulates gene expression differentially, depending on dimer composition. Homodimers induce expression of FGFR2 and POSTN while heterodimers repress FGFR2 and POSTN expression and induce THBS1 expression. Heterodimerization is also required for osteoblast differentiation. Represses the activity of the circadian transcriptional activator: NPAS2-BMAL1 heterodimer. The chain is Twist-related protein 1 (TWIST1) from Pongo pygmaeus (Bornean orangutan).